The sequence spans 53 residues: IgW transmembrane form Tm1T3/Tm6T3/Tm3C4 (53 aa).

Residues 1 to 25 (VQAVPPDVKGEEGKEEVEDMDGDDN) are disordered. Residues 13-24 (GKEEVEDMDGDD) are compositionally biased toward acidic residues. A helical transmembrane segment spans residues 29–49 (VAAFAILFILSFLYSTFVTVV).

As to expression, expressed in the spleen, pancreas, peripheral blood lymphocytes and at low levels in the epigonal organ.

It is found in the membrane. The sequence is that of IgW transmembrane form Tm1T3/Tm6T3/Tm3C4 from Ginglymostoma cirratum (Nurse shark).